Here is a 196-residue protein sequence, read N- to C-terminus: Large ribosomal subunit protein eL15 (196 aa).

A disordered region spans residues 162–196 (RGLTNAGRSNRGLQNRGKGAEHTRPSAGSGSRRGK).

The protein belongs to the eukaryotic ribosomal protein eL15 family.

This chain is Large ribosomal subunit protein eL15, found in Haloquadratum walsbyi (strain DSM 16790 / HBSQ001).